The sequence spans 311 residues: tRNA dimethylallyltransferase (311 aa).

10–17 is an ATP binding site; it reads GPTAVGKS. Residue 12 to 17 participates in substrate binding; it reads TAVGKS. The segment at 35–38 is interaction with substrate tRNA; the sequence is DSMQ.

It belongs to the IPP transferase family. As to quaternary structure, monomer. It depends on Mg(2+) as a cofactor.

It carries out the reaction adenosine(37) in tRNA + dimethylallyl diphosphate = N(6)-dimethylallyladenosine(37) in tRNA + diphosphate. Catalyzes the transfer of a dimethylallyl group onto the adenine at position 37 in tRNAs that read codons beginning with uridine, leading to the formation of N6-(dimethylallyl)adenosine (i(6)A). This Carboxydothermus hydrogenoformans (strain ATCC BAA-161 / DSM 6008 / Z-2901) protein is tRNA dimethylallyltransferase.